The chain runs to 170 residues: uncharacterized protein (170 aa).

In terms of domain architecture, Ferritin-like diiron spans M1–T148.

This is an uncharacterized protein from Ureaplasma parvum serovar 3 (strain ATCC 700970).